The following is a 170-amino-acid chain: Calcineurin subunit B type 2 (170 aa).

EF-hand domains are found at residues Asp18–Leu46, Gln50–Lys85, Asp87–Asn122, and Gln128–His163. The Ca(2+) site is built by Asp31, Asp33, Ser35, Glu42, Asp63, Asp65, Asn67, Glu69, Glu74, Asp100, Asp102, Asp104, Tyr106, Glu111, Asp141, Asp143, Asp145, Lys147, and Glu152. The residue at position 35 (Ser35) is a Phosphoserine.

Belongs to the calcineurin regulatory subunit family. As to quaternary structure, composed of a catalytic subunit (A) and a regulatory subunit (B). Interacts with sra.

In terms of biological role, calcineurin is a calcium-binding and calmodulin-binding protein found in all cells from yeast to mammals, and a calcium-dependent, calmodulin-stimulated protein phosphatase. The polypeptide is Calcineurin subunit B type 2 (CanB2) (Drosophila melanogaster (Fruit fly)).